Consider the following 521-residue polypeptide: GMP synthase [glutamine-hydrolyzing] (521 aa).

In terms of domain architecture, Glutamine amidotransferase type-1 spans 5–203 (KILILDFGSQ…VHEICGCGRD (199 aa)). The active-site Nucleophile is cysteine 82. Residues histidine 177 and glutamate 179 contribute to the active site. Residues 204 to 396 (WNMPDYVNEA…LGLPHEMVYR (193 aa)) form the GMPS ATP-PPase domain. 231–237 (SGGVDSS) contacts ATP.

Homodimer.

It carries out the reaction XMP + L-glutamine + ATP + H2O = GMP + L-glutamate + AMP + diphosphate + 2 H(+). It functions in the pathway purine metabolism; GMP biosynthesis; GMP from XMP (L-Gln route): step 1/1. Catalyzes the synthesis of GMP from XMP. This chain is GMP synthase [glutamine-hydrolyzing], found in Aromatoleum aromaticum (strain DSM 19018 / LMG 30748 / EbN1) (Azoarcus sp. (strain EbN1)).